Consider the following 50-residue polypeptide: MFKRKSTAELVAQMAKLAGNKGGFSSEDKGEWKLKLDNAGNGQAVIRFLP.

As to quaternary structure, homodimer in the absence of DNA, monomer when binding DNA.

In terms of biological role, binds preferentially to single-stranded DNA and therefore, destabilizes double-stranded DNA. It is involved in DNA replication, repair and recombination. Binds ss-DNA as the replication fork advances and stimulates the replisome processivity and accuracy. The sequence is that of Single-stranded DNA-binding protein (32) from Enterobacteria phage RB27 (Bacteriophage RB27).